The sequence spans 170 residues: Alpha-crystallin A chain (170 aa).

An N-acetylmethionine modification is found at M1. The segment at M1–E63 is required for complex formation with BFSP1 and BFSP2. Q6 bears the Deamidated glutamine; partial mark. Residue S45 is modified to Phosphoserine. Q50 is subject to Deamidated glutamine; partial. A sHSP domain is found at L52–E161. K99 carries the N6-acetyllysine modification. H100 is a Zn(2+) binding site. At N101 the chain carries Deamidated asparagine; partial. Positions 102, 107, and 151 each coordinate Zn(2+). Residues P144–S170 form a disordered region. A compositionally biased stretch (basic and acidic residues) spans D148 to P164. S159 is a glycosylation site (O-linked (GlcNAc) serine).

Belongs to the small heat shock protein (HSP20) family. Heteromer composed of three CRYAA and one CRYAB subunits. Inter-subunit bridging via zinc ions enhances stability, which is crucial as there is no protein turn over in the lens. Can also form homodimers and homotetramers (dimers of dimers) which serve as the building blocks of homooligomers. Within homooligomers, the zinc-binding motif is created from residues of 3 different molecules. His-100 and Glu-102 from one molecule are ligands of the zinc ion, and His-107 and His-151 residues from additional molecules complete the site with tetrahedral coordination geometry. Part of a complex required for lens intermediate filament formation composed of BFSP1, BFSP2 and CRYAA. In terms of processing, acetylation at Lys-99 may increase chaperone activity. Post-translationally, undergoes age-dependent proteolytical cleavage at the C-terminus.

It localises to the cytoplasm. The protein resides in the nucleus. Contributes to the transparency and refractive index of the lens. Acts as a chaperone, preventing aggregation of various proteins under a wide range of stress conditions. Required for the correct formation of lens intermediate filaments as part of a complex composed of BFSP1, BFSP2 and CRYAA. The chain is Alpha-crystallin A chain (CRYAA) from Tamandua mexicana (Northern Tamandua).